Here is a 189-residue protein sequence, read N- to C-terminus: UPF0301 protein A1E_00140 (189 aa).

This sequence belongs to the UPF0301 (AlgH) family.

The chain is UPF0301 protein A1E_00140 from Rickettsia canadensis (strain McKiel).